Here is a 191-residue protein sequence, read N- to C-terminus: Inosine triphosphate pyrophosphatase (191 aa).

An ITP-binding site is contributed by 12–17 (TGNANK). Glu-42 is a binding site for Mg(2+). ITP-binding positions include Lys-54, 70–71 (DT), Lys-87, 145–148 (FGWD), Lys-168, and 173–174 (HR).

The protein belongs to the HAM1 NTPase family. Homodimer. Mg(2+) serves as cofactor. Mn(2+) is required as a cofactor.

It localises to the cytoplasm. The enzyme catalyses ITP + H2O = IMP + diphosphate + H(+). The catalysed reaction is dITP + H2O = dIMP + diphosphate + H(+). It carries out the reaction XTP + H2O = XMP + diphosphate + H(+). Functionally, pyrophosphatase that hydrolyzes non-canonical purine nucleotides such as inosine triphosphate (ITP), deoxyinosine triphosphate (dITP) or xanthosine 5'-triphosphate (XTP) to their respective monophosphate derivatives. The enzyme does not distinguish between the deoxy- and ribose forms. Probably excludes non-canonical purines from RNA and DNA precursor pools, thus preventing their incorporation into RNA and DNA and avoiding chromosomal lesions. The sequence is that of Inosine triphosphate pyrophosphatase from Phytophthora infestans (strain T30-4) (Potato late blight agent).